A 204-amino-acid chain; its full sequence is Outer-membrane lipoprotein carrier protein (204 aa).

Residues 1-21 (MKKIAVTCALLSAFAVSSVWA) form the signal peptide. The tract at residues 169 to 204 (QRSSYQLKSQQNGAVDMSKFTFTPPQGVTVDDQRNK) is disordered. Positions 171-181 (SSYQLKSQQNG) are enriched in polar residues.

This sequence belongs to the LolA family. In terms of assembly, monomer.

The protein localises to the periplasm. In terms of biological role, participates in the translocation of lipoproteins from the inner membrane to the outer membrane. Only forms a complex with a lipoprotein if the residue after the N-terminal Cys is not an aspartate (The Asp acts as a targeting signal to indicate that the lipoprotein should stay in the inner membrane). This chain is Outer-membrane lipoprotein carrier protein, found in Cronobacter sakazakii (strain ATCC BAA-894) (Enterobacter sakazakii).